Here is a 370-residue protein sequence, read N- to C-terminus: ADP-ribosylhydrolase ARH3 (370 aa).

Glu-47 lines the Mg(2+) pocket. Position 70 is a phosphothreonine (Thr-70). Residues Thr-82, Asp-83, and Asp-84 each coordinate Mg(2+). Asp-83 lines the substrate pocket. Substrate is bound by residues 152–158, His-188, Leu-241, and Ile-277; that span reads KGSYGNG. Mg(2+)-binding residues include Asp-320, Asp-322, and Thr-323.

It belongs to the ADP-ribosylglycohydrolase family. In terms of assembly, monomer. Requires Mg(2+) as cofactor. In terms of tissue distribution, ubiquitous.

The protein resides in the nucleus. It localises to the cytoplasm. It is found in the chromosome. Its subcellular location is the mitochondrion matrix. It carries out the reaction [(1''-&gt;2')-ADP-alpha-D-ribose](n) + H2O = [(1''-&gt;2')-ADP-alpha-D-ribose](n-1) + ADP-D-ribose. It catalyses the reaction 1''-O-acetyl-ADP-alpha-D-ribose + H2O = ADP-D-ribose + acetate + H(+). The enzyme catalyses O-(ADP-D-ribosyl)-L-seryl-[protein] + H2O = ADP-D-ribose + L-seryl-[protein]. The catalysed reaction is alpha-NAD(+) + H2O = ADP-D-ribose + nicotinamide + H(+). The protein undergoes a dramatic conformational switch from closed to open states upon substrate-binding, which enables specific substrate recognition for the 1''-O-linkage. The glutamate flap (Glu-47) blocks substrate entrance to Mg(2+) in the unliganded closed state. In presence of substrate, Glu-47 is ejected from the active site: this closed-to-open transition significantly widens the substrate-binding channel and precisely positions the scissile 1''-O-linkage for cleavage while securing tightly 2'- and 3'-hydroxyls of ADP-ribose. Functionally, ADP-ribosylhydrolase that preferentially hydrolyzes the scissile alpha-O-linkage attached to the anomeric C1'' position of ADP-ribose and acts on different substrates, such as proteins ADP-ribosylated on serine and threonine, free poly(ADP-ribose) and O-acetyl-ADP-D-ribose. Specifically acts as a serine mono-ADP-ribosylhydrolase by mediating the removal of mono-ADP-ribose attached to serine residues on proteins, thereby playing a key role in DNA damage response. Serine ADP-ribosylation of proteins constitutes the primary form of ADP-ribosylation of proteins in response to DNA damage. Does not hydrolyze ADP-ribosyl-arginine, -cysteine, -diphthamide, or -asparagine bonds. Also able to degrade protein free poly(ADP-ribose), which is synthesized in response to DNA damage: free poly(ADP-ribose) acts as a potent cell death signal and its degradation by ADPRHL2 protects cells from poly(ADP-ribose)-dependent cell death, a process named parthanatos. Also hydrolyzes free poly(ADP-ribose) in mitochondria. Specifically digests O-acetyl-ADP-D-ribose, a product of deacetylation reactions catalyzed by sirtuins. Specifically degrades 1''-O-acetyl-ADP-D-ribose isomer, rather than 2''-O-acetyl-ADP-D-ribose or 3''-O-acetyl-ADP-D-ribose isomers. This is ADP-ribosylhydrolase ARH3 (Adprs) from Mus musculus (Mouse).